Reading from the N-terminus, the 176-residue chain is ATP-dependent protease subunit HslV (176 aa).

The active site involves T2. 3 residues coordinate Na(+): G157, C160, and T163.

Belongs to the peptidase T1B family. HslV subfamily. A double ring-shaped homohexamer of HslV is capped on each side by a ring-shaped HslU homohexamer. The assembly of the HslU/HslV complex is dependent on binding of ATP.

Its subcellular location is the cytoplasm. The enzyme catalyses ATP-dependent cleavage of peptide bonds with broad specificity.. Its activity is regulated as follows. Allosterically activated by HslU binding. Protease subunit of a proteasome-like degradation complex believed to be a general protein degrading machinery. This chain is ATP-dependent protease subunit HslV, found in Pseudomonas fluorescens (strain SBW25).